Consider the following 59-residue polypeptide: Potassium channel toxin alpha-KTx 16.4 (59 aa).

Residues 1-22 form the signal peptide; that stretch reads MKILSIVLIALIICSISICTEA. Disulfide bonds link C30–C51, C36–C56, and C40–C58.

Belongs to the short scorpion toxin superfamily. Potassium channel inhibitor family. Alpha-KTx 16 subfamily. Expressed by the venom gland.

It is found in the secreted. Functionally, weak inhibitor of voltage-gated potassium channel hKv1.3/KCNA3. The chain is Potassium channel toxin alpha-KTx 16.4 from Mesobuthus eupeus (Lesser Asian scorpion).